Here is a 328-residue protein sequence, read N- to C-terminus: Transcriptional regulator protein Pur-beta-B (328 aa).

3 disordered regions span residues 1-35 (MADG…ELAS), 100-124 (SPEQ…RALK), and 289-328 (QERQ…VDDD). Ala-2 is subject to N-acetylalanine. Residues 9 to 18 (ERGGSSGGPS) show a composition bias toward gly residues. Residues 24 to 35 (MSREQETQELAS) are compositionally biased toward basic and acidic residues. The segment at 27–260 (EQETQELASK…LRVSEVKPSY (234 aa)) is DNA-binding. A compositionally biased stretch (basic and acidic residues) spans 289-303 (QERQRDKMYDRRGPG). A compositionally biased stretch (gly residues) spans 304-317 (ERGGSLGPGAGGGG). Residues 318 to 328 (DDSETEDVDDD) are compositionally biased toward acidic residues.

This sequence belongs to the PUR DNA-binding protein family.

Its subcellular location is the nucleus. Functionally, transcriptional regulator which can act as an activator or a repressor. The sequence is that of Transcriptional regulator protein Pur-beta-B (purb-b) from Xenopus laevis (African clawed frog).